The chain runs to 256 residues: Geranylgeranylglyceryl phosphate synthase (256 aa).

Mg(2+) is bound by residues D28 and S53. Sn-glycerol 1-phosphate-binding positions include Y172–G178, G203–G204, and G225–T226.

The protein belongs to the GGGP/HepGP synthase family. Group II subfamily. The cofactor is Mg(2+).

The protein localises to the cytoplasm. It carries out the reaction sn-glycerol 1-phosphate + (2E,6E,10E)-geranylgeranyl diphosphate = sn-3-O-(geranylgeranyl)glycerol 1-phosphate + diphosphate. It functions in the pathway membrane lipid metabolism; glycerophospholipid metabolism. Its function is as follows. Prenyltransferase that catalyzes the transfer of the geranylgeranyl moiety of geranylgeranyl diphosphate (GGPP) to the C3 hydroxyl of sn-glycerol-1-phosphate (G1P). This reaction is the first ether-bond-formation step in the biosynthesis of archaeal membrane lipids. The polypeptide is Geranylgeranylglyceryl phosphate synthase (Methanococcus maripaludis (strain C6 / ATCC BAA-1332)).